A 137-amino-acid polypeptide reads, in one-letter code: Putative pre-16S rRNA nuclease (137 aa).

The protein belongs to the YqgF nuclease family.

It localises to the cytoplasm. Could be a nuclease involved in processing of the 5'-end of pre-16S rRNA. The protein is Putative pre-16S rRNA nuclease of Anaeromyxobacter sp. (strain K).